A 176-amino-acid polypeptide reads, in one-letter code: Peptide methionine sulfoxide reductase MsrA (176 aa).

Cys10 is a catalytic residue.

The protein belongs to the MsrA Met sulfoxide reductase family.

The enzyme catalyses L-methionyl-[protein] + [thioredoxin]-disulfide + H2O = L-methionyl-(S)-S-oxide-[protein] + [thioredoxin]-dithiol. It carries out the reaction [thioredoxin]-disulfide + L-methionine + H2O = L-methionine (S)-S-oxide + [thioredoxin]-dithiol. In terms of biological role, has an important function as a repair enzyme for proteins that have been inactivated by oxidation. Catalyzes the reversible oxidation-reduction of methionine sulfoxide in proteins to methionine. The sequence is that of Peptide methionine sulfoxide reductase MsrA from Leptospira borgpetersenii serovar Hardjo-bovis (strain L550).